Reading from the N-terminus, the 387-residue chain is Protein BTN1 (387 aa).

An N-terminal signal peptide occupies residues 1–31 (MELDRDKKTFAYFWLFGLINNILYVVILSAA). The next 10 helical transmembrane spans lie at 43–63 (IVLL…PFFV), 72–92 (IPIL…RSLW), 93–113 (LCLP…ITFL), 129–149 (SGTG…TTVF), 151–171 (LNIQ…LLYY), 225–245 (TVYL…LFPI), 257–276 (YVTY…TWGH), 278–298 (LPVK…LITL), 308–328 (SISW…SSYV), and 347–367 (LGSV…LGII).

The protein belongs to the battenin family.

The protein resides in the vacuole membrane. Involved in vacuolar transport and vacuole pH homeostasis. Also required for cytokinesis. The protein is Protein BTN1 (BTN1) of Kluyveromyces lactis (strain ATCC 8585 / CBS 2359 / DSM 70799 / NBRC 1267 / NRRL Y-1140 / WM37) (Yeast).